A 109-amino-acid chain; its full sequence is UPF0449 protein C19orf25 homolog (109 aa).

A Phosphotyrosine modification is found at Tyr63.

The protein belongs to the UPF0449 family.

This is UPF0449 protein C19orf25 homolog from Rattus norvegicus (Rat).